The primary structure comprises 134 residues: Small ribosomal subunit protein uS11 (134 aa).

The protein belongs to the universal ribosomal protein uS11 family. Part of the 30S ribosomal subunit. Interacts with proteins S7 and S18. Binds to IF-3.

Its function is as follows. Located on the platform of the 30S subunit, it bridges several disparate RNA helices of the 16S rRNA. Forms part of the Shine-Dalgarno cleft in the 70S ribosome. The chain is Small ribosomal subunit protein uS11 from Corynebacterium jeikeium (strain K411).